We begin with the raw amino-acid sequence, 210 residues long: MRLIPSRLSYLFLHLFAFCYYAQVTIQSPPNFTQHVSEQSKVTDRVSRRLIRTYQLYSRTSGKHVQVLANKKINAMAEDGDVHAKLIVETDTFGSRVRIKGAETGFYICMNRRGKLIGKKNGLGKDCIFTEIVLENNYTALQNVKYEGWYMAFTRKGRPRKGSKTRQHQREVHFMKRLPKGHQIAEHRPFDFINYPFNRRTKRTRYSGER.

The first 27 residues, 1 to 27 (MRLIPSRLSYLFLHLFAFCYYAQVTIQ), serve as a signal peptide directing secretion.

This sequence belongs to the heparin-binding growth factors family. In terms of assembly, monomer. Homodimer.

Its subcellular location is the secreted. Functionally, plays an important role in the regulation of embryonic development, cell proliferation, cell differentiation and cell migration. Required for Kupffer's vesicle ciliogenesis. The polypeptide is Fibroblast growth factor 8 (Danio rerio (Zebrafish)).